A 425-amino-acid polypeptide reads, in one-letter code: Enolase (425 aa).

Glutamine 162 is a (2R)-2-phosphoglycerate binding site. The Proton donor role is filled by glutamate 204. Mg(2+)-binding residues include aspartate 241, glutamate 282, and aspartate 309. Lysine 334, arginine 363, serine 364, and lysine 385 together coordinate (2R)-2-phosphoglycerate. Lysine 334 (proton acceptor) is an active-site residue.

This sequence belongs to the enolase family. Mg(2+) serves as cofactor.

The protein localises to the cytoplasm. The protein resides in the secreted. It is found in the cell surface. The enzyme catalyses (2R)-2-phosphoglycerate = phosphoenolpyruvate + H2O. The protein operates within carbohydrate degradation; glycolysis; pyruvate from D-glyceraldehyde 3-phosphate: step 4/5. Catalyzes the reversible conversion of 2-phosphoglycerate (2-PG) into phosphoenolpyruvate (PEP). It is essential for the degradation of carbohydrates via glycolysis. The protein is Enolase of Corynebacterium diphtheriae (strain ATCC 700971 / NCTC 13129 / Biotype gravis).